We begin with the raw amino-acid sequence, 407 residues long: Phosphopentomutase (407 aa).

D10, D306, H311, D347, H348, and H359 together coordinate Mn(2+).

This sequence belongs to the phosphopentomutase family. Mn(2+) serves as cofactor.

It localises to the cytoplasm. The enzyme catalyses 2-deoxy-alpha-D-ribose 1-phosphate = 2-deoxy-D-ribose 5-phosphate. It catalyses the reaction alpha-D-ribose 1-phosphate = D-ribose 5-phosphate. Its pathway is carbohydrate degradation; 2-deoxy-D-ribose 1-phosphate degradation; D-glyceraldehyde 3-phosphate and acetaldehyde from 2-deoxy-alpha-D-ribose 1-phosphate: step 1/2. Its function is as follows. Isomerase that catalyzes the conversion of deoxy-ribose 1-phosphate (dRib-1-P) and ribose 1-phosphate (Rib-1-P) to deoxy-ribose 5-phosphate (dRib-5-P) and ribose 5-phosphate (Rib-5-P), respectively. The polypeptide is Phosphopentomutase (Pectobacterium atrosepticum (strain SCRI 1043 / ATCC BAA-672) (Erwinia carotovora subsp. atroseptica)).